A 229-amino-acid polypeptide reads, in one-letter code: Cytochrome c oxidase subunit 2 (229 aa).

At 1–14 (MPTPNQTNFQDAAS) the chain is on the mitochondrial intermembrane side. A helical membrane pass occupies residues 15-45 (PLMEELTHFHDHTLMIVFMISLLVLYILLSM). Topologically, residues 46 to 59 (LSTKLTHTNTANAQ) are mitochondrial matrix. A helical transmembrane segment spans residues 60–87 (QAEMVWTILPAIILITIALPSLQILYMM). Over 88 to 229 (DEINKPHMTI…DLWLAMIDTL (142 aa)) the chain is Mitochondrial intermembrane. Cu cation is bound by residues His-161, Cys-196, Glu-198, Cys-200, His-204, and Met-207. Glu-198 contacts Mg(2+).

Belongs to the cytochrome c oxidase subunit 2 family. As to quaternary structure, component of the cytochrome c oxidase (complex IV, CIV), a multisubunit enzyme composed of 14 subunits. The complex is composed of a catalytic core of 3 subunits MT-CO1, MT-CO2 and MT-CO3, encoded in the mitochondrial DNA, and 11 supernumerary subunits COX4I, COX5A, COX5B, COX6A, COX6B, COX6C, COX7A, COX7B, COX7C, COX8 and NDUFA4, which are encoded in the nuclear genome. The complex exists as a monomer or a dimer and forms supercomplexes (SCs) in the inner mitochondrial membrane with NADH-ubiquinone oxidoreductase (complex I, CI) and ubiquinol-cytochrome c oxidoreductase (cytochrome b-c1 complex, complex III, CIII), resulting in different assemblies (supercomplex SCI(1)III(2)IV(1) and megacomplex MCI(2)III(2)IV(2)). Found in a complex with TMEM177, COA6, COX18, COX20, SCO1 and SCO2. Interacts with TMEM177 in a COX20-dependent manner. Interacts with COX20. Interacts with COX16. Requires Cu cation as cofactor.

The protein localises to the mitochondrion inner membrane. It catalyses the reaction 4 Fe(II)-[cytochrome c] + O2 + 8 H(+)(in) = 4 Fe(III)-[cytochrome c] + 2 H2O + 4 H(+)(out). Functionally, component of the cytochrome c oxidase, the last enzyme in the mitochondrial electron transport chain which drives oxidative phosphorylation. The respiratory chain contains 3 multisubunit complexes succinate dehydrogenase (complex II, CII), ubiquinol-cytochrome c oxidoreductase (cytochrome b-c1 complex, complex III, CIII) and cytochrome c oxidase (complex IV, CIV), that cooperate to transfer electrons derived from NADH and succinate to molecular oxygen, creating an electrochemical gradient over the inner membrane that drives transmembrane transport and the ATP synthase. Cytochrome c oxidase is the component of the respiratory chain that catalyzes the reduction of oxygen to water. Electrons originating from reduced cytochrome c in the intermembrane space (IMS) are transferred via the dinuclear copper A center (CU(A)) of subunit 2 and heme A of subunit 1 to the active site in subunit 1, a binuclear center (BNC) formed by heme A3 and copper B (CU(B)). The BNC reduces molecular oxygen to 2 water molecules using 4 electrons from cytochrome c in the IMS and 4 protons from the mitochondrial matrix. The protein is Cytochrome c oxidase subunit 2 (MT-CO2) of Pelomedusa subrufa (African side-necked turtle).